The primary structure comprises 215 residues: Ribose-5-phosphate isomerase A (215 aa).

Substrate contacts are provided by residues Thr26–Thr29, Asp79–Asp82, and Lys92–Gly95. The Proton acceptor role is filled by Glu101. Lys119 is a substrate binding site.

Belongs to the ribose 5-phosphate isomerase family. In terms of assembly, homodimer.

It carries out the reaction aldehydo-D-ribose 5-phosphate = D-ribulose 5-phosphate. Its pathway is carbohydrate degradation; pentose phosphate pathway; D-ribose 5-phosphate from D-ribulose 5-phosphate (non-oxidative stage): step 1/1. In terms of biological role, catalyzes the reversible conversion of ribose-5-phosphate to ribulose 5-phosphate. This is Ribose-5-phosphate isomerase A from Xylella fastidiosa (strain Temecula1 / ATCC 700964).